We begin with the raw amino-acid sequence, 264 residues long: Tryptophan synthase alpha chain (264 aa).

Active-site proton acceptor residues include Glu-44 and Asp-55.

The protein belongs to the TrpA family. As to quaternary structure, tetramer of two alpha and two beta chains.

It catalyses the reaction (1S,2R)-1-C-(indol-3-yl)glycerol 3-phosphate + L-serine = D-glyceraldehyde 3-phosphate + L-tryptophan + H2O. It participates in amino-acid biosynthesis; L-tryptophan biosynthesis; L-tryptophan from chorismate: step 5/5. In terms of biological role, the alpha subunit is responsible for the aldol cleavage of indoleglycerol phosphate to indole and glyceraldehyde 3-phosphate. The chain is Tryptophan synthase alpha chain from Lactiplantibacillus plantarum (strain ATCC BAA-793 / NCIMB 8826 / WCFS1) (Lactobacillus plantarum).